The following is a 321-amino-acid chain: Aldose reductase C (321 aa).

22 to 31 (GNQIPSIGLG) provides a ligand contact to NADP(+). Tyrosine 62 functions as the Proton donor in the catalytic mechanism. A substrate-binding site is contributed by histidine 124. Residue 227–281 (SPLGQGKCDFFSNKILKSIAGKYKKSVANVIFKWLNQRGIAAIPKSGNHSRIIEN) participates in NADP(+) binding.

Belongs to the aldo/keto reductase family.

The catalysed reaction is an alditol + NAD(+) = an aldose + NADH + H(+). The enzyme catalyses an alditol + NADP(+) = an aldose + NADPH + H(+). Catalyzes the NADPH-dependent reduction of a wide variety of carbonyl-containing compounds to their corresponding alcohols with a broad range of catalytic efficiencies. The protein is Aldose reductase C (alrC) of Dictyostelium discoideum (Social amoeba).